A 608-amino-acid chain; its full sequence is 1-deoxy-D-xylulose-5-phosphate synthase (608 aa).

Thiamine diphosphate-binding positions include His66 and 107–109; that span reads GHA. Asp138 provides a ligand contact to Mg(2+). Residues 139–140, Asn167, Phe277, and Glu350 each bind thiamine diphosphate; that span reads GA. Asn167 is a binding site for Mg(2+).

It belongs to the transketolase family. DXPS subfamily. Homodimer. Mg(2+) serves as cofactor. The cofactor is thiamine diphosphate.

The catalysed reaction is D-glyceraldehyde 3-phosphate + pyruvate + H(+) = 1-deoxy-D-xylulose 5-phosphate + CO2. It participates in metabolic intermediate biosynthesis; 1-deoxy-D-xylulose 5-phosphate biosynthesis; 1-deoxy-D-xylulose 5-phosphate from D-glyceraldehyde 3-phosphate and pyruvate: step 1/1. In terms of biological role, catalyzes the acyloin condensation reaction between C atoms 2 and 3 of pyruvate and glyceraldehyde 3-phosphate to yield 1-deoxy-D-xylulose-5-phosphate (DXP). The protein is 1-deoxy-D-xylulose-5-phosphate synthase of Thermotoga sp. (strain RQ2).